Here is a 124-residue protein sequence, read N- to C-terminus: Small ribosomal subunit protein uS12 (124 aa).

A 3-methylthioaspartic acid modification is found at D89.

It belongs to the universal ribosomal protein uS12 family. As to quaternary structure, part of the 30S ribosomal subunit. Contacts proteins S8 and S17. May interact with IF1 in the 30S initiation complex.

Functionally, with S4 and S5 plays an important role in translational accuracy. Interacts with and stabilizes bases of the 16S rRNA that are involved in tRNA selection in the A site and with the mRNA backbone. Located at the interface of the 30S and 50S subunits, it traverses the body of the 30S subunit contacting proteins on the other side and probably holding the rRNA structure together. The combined cluster of proteins S8, S12 and S17 appears to hold together the shoulder and platform of the 30S subunit. This is Small ribosomal subunit protein uS12 from Proteus mirabilis (strain HI4320).